The chain runs to 1414 residues: Alpha-(1-&gt;3)-arabinofuranosyltransferase (1414 aa).

A run of 9 helical transmembrane segments spans residues 57 to 77 (YLFP…PGWV), 81 to 101 (LWWA…AEAL), 128 to 148 (AISS…PVIL), 167 to 187 (VALM…AAVI), 203 to 223 (AWWL…LLML), 273 to 293 (STTA…GLAL), 302 to 322 (LITM…GGLG), 352 to 372 (LPLA…GSAP), and 389 to 409 (VAVA…AWTA). Residues 687-845 (YPSDGADLVY…QYDASGFAHP (159 aa)) form the F5/8 type C domain. The next 4 helical transmembrane spans lie at 1253–1273 (VGLI…LIPV), 1297–1317 (ALVA…GAAM), 1333–1353 (VWDN…GSVL), and 1364–1384 (YVGH…FLAA). The disordered stretch occupies residues 1393-1414 (PEPSEDGRSAKPEHTGASAHAG). The segment covering 1394–1406 (EPSEDGRSAKPEH) has biased composition (basic and acidic residues).

The protein localises to the membrane. It carries out the reaction Adds an alpha-D-arabinofuranosyl group from trans,octacis-decaprenylphospho-beta-D-arabinofuranose at the 3-O-position of an alpha-(1-&gt;5)-arabinofuranan chain attached to a beta-(1-&gt;5)-galactofuranan chain.. Its pathway is cell wall biogenesis; cell wall polysaccharide biosynthesis. Its function is as follows. Involved in the biosynthesis of the arabinogalactan (AG) region of the mycolylarabinogalactan-peptidoglycan (mAGP) complex, an essential component of the mycobacterial cell wall. Catalyzes the addition of an arabinofuranosyl (Araf) residue from the sugar donor decaprenyl-phospho-arabinose (DPA) on the C-3 of an alpha-(1-&gt;5)-linked Araf from the arabinan backbone of AG. This Mycolicibacterium smegmatis (strain ATCC 700084 / mc(2)155) (Mycobacterium smegmatis) protein is Alpha-(1-&gt;3)-arabinofuranosyltransferase (aftD).